The chain runs to 283 residues: Bis(5'-nucleosyl)-tetraphosphatase, symmetrical (283 aa).

The protein belongs to the Ap4A hydrolase family.

It carries out the reaction P(1),P(4)-bis(5'-adenosyl) tetraphosphate + H2O = 2 ADP + 2 H(+). Hydrolyzes diadenosine 5',5'''-P1,P4-tetraphosphate to yield ADP. This Pseudomonas fluorescens (strain SBW25) protein is Bis(5'-nucleosyl)-tetraphosphatase, symmetrical.